The sequence spans 1018 residues: Thrombospondin type-1 domain-containing protein 4 (1018 aa).

The first 26 residues, M1–P26, serve as a signal peptide directing secretion. 3 disordered regions span residues K34–V56, H116–A240, and S534–Q623. The TSP type-1 1 domain occupies P54 to P307. Basic residues predominate over residues Q187 to S199. A compositionally biased stretch (polar residues) spans H216–G230. 2 stretches are compositionally biased toward basic and acidic residues: residues Q558 to S573 and R592 to D603. 5 TSP type-1 domains span residues C676–S737, W739–P792, C793–T851, G852–P911, and C912–V968. The PLAC domain maps to V971–A1008.

Isoform 2 interacts with FBN1. Isoform 2 may interact with TGFB1. As to expression, both isoforms are expressed in the embryo from 7 dpc through 17. Isoform 1 is widely expressed in adult tissues. Isoform 2 is detected in brain, spinal cord, eye, kidney, stomach and uterus. Mainly observed in fibrillar extracellular matrices in elastic tissues (at protein level).

The protein resides in the secreted. It is found in the extracellular space. It localises to the extracellular matrix. Promotes FBN1 matrix assembly. Attenuates TGFB signaling, possibly by accelerating the sequestration of large latent complexes of TGFB or active TGFB by FBN1 microfibril assembly, thereby negatively regulating the expression of TGFB regulatory targets, such as POSTN. This Mus musculus (Mouse) protein is Thrombospondin type-1 domain-containing protein 4 (Thsd4).